The sequence spans 244 residues: Triosephosphate isomerase (244 aa).

9-11 (NWK) is a substrate binding site. The Electrophile role is filled by His-93. The active-site Proton acceptor is Glu-161. Residues Gly-167, Ser-206, and 227 to 228 (GG) contribute to the substrate site.

This sequence belongs to the triosephosphate isomerase family. As to quaternary structure, homodimer.

The protein localises to the cytoplasm. It carries out the reaction D-glyceraldehyde 3-phosphate = dihydroxyacetone phosphate. Its pathway is carbohydrate biosynthesis; gluconeogenesis. The protein operates within carbohydrate degradation; glycolysis; D-glyceraldehyde 3-phosphate from glycerone phosphate: step 1/1. Involved in the gluconeogenesis. Catalyzes stereospecifically the conversion of dihydroxyacetone phosphate (DHAP) to D-glyceraldehyde-3-phosphate (G3P). The chain is Triosephosphate isomerase from Deinococcus geothermalis (strain DSM 11300 / CIP 105573 / AG-3a).